The sequence spans 384 residues: 3,7-dimethylxanthine N-methyltransferase 1 (384 aa).

S-adenosyl-L-homocysteine-binding residues include Y18, C61, N66, D100, L101, S139, F140, and C156. A theobromine-binding site is contributed by Y157. Residue C158 coordinates S-adenosyl-L-homocysteine. Theobromine-binding residues include H160 and W161. N178 contacts Mg(2+). S237 is a binding site for theobromine. D260, F262, and N263 together coordinate Mg(2+). Y368 contributes to the theobromine binding site.

It belongs to the methyltransferase superfamily. Type-7 methyltransferase family. Mg(2+) serves as cofactor. Highly expressed in developing endosperm and immature fruits (grains). Detected in young leaves and flower buds, but not in mature fruits.

The enzyme catalyses theobromine + S-adenosyl-L-methionine = caffeine + S-adenosyl-L-homocysteine + H(+). The catalysed reaction is 1,7-dimethylxanthine + S-adenosyl-L-methionine = caffeine + S-adenosyl-L-homocysteine + H(+). It carries out the reaction 7-methylxanthine + S-adenosyl-L-methionine = theobromine + S-adenosyl-L-homocysteine + H(+). Its pathway is alkaloid biosynthesis. Involved in the biosynthesis of caffeine. Catalyzes the conversion of 7-methylxanthine to caffeine, likely via theobromine as an intermediate. The chain is 3,7-dimethylxanthine N-methyltransferase 1 from Coffea arabica (Arabian coffee).